A 94-amino-acid chain; its full sequence is Conotoxin Qc6.1 (94 aa).

A signal peptide spans 1–22; that stretch reads MKLTCMMIVALLFLTAWTFVTA. Residues 23-62 constitute a propeptide that is removed on maturation; that stretch reads VDSKNELENRGGWGQAGGWGKLFPMARDEMKNSEVSKLDN. Intrachain disulfides connect Cys-66–Cys-84, Cys-73–Cys-88, and Cys-83–Cys-92.

The protein belongs to the conotoxin O1 superfamily. Expressed by the venom duct.

Its subcellular location is the secreted. In Conus quercinus (Oak cone), this protein is Conotoxin Qc6.1.